The chain runs to 235 residues: MERLATRSSHDDPYSRSSLPTSNAINSNHESNGSTFSYVQSLRRAKATVWSDIGRVAPLHSSPSIKSSSQNGKSSSKGLGGMRSRVFSSQHHGVYHTRPASLHSRTMAPQHTILTPRLSATEGKDDDEDELVISTSNTAPTYISMIESSRASSTHSGTAPSIMGMSIHSRADSRAETTQSDGFESRSGSPTHDIQSYLVNRRSSSSESSDEDSAEEGMKRLVITNMGDNDEFDSD.

Positions 1–14 (MERLATRSSHDDPY) are enriched in basic and acidic residues. Disordered regions lie at residues 1-34 (MERL…SNGS), 58-83 (PLHS…GGMR), and 169-235 (SRAD…FDSD). Residues 15–34 (SRSSLPTSNAINSNHESNGS) are compositionally biased toward polar residues. Residues 61 to 77 (SSPSIKSSSQNGKSSSK) are compositionally biased toward low complexity. The segment covering 176 to 202 (ETTQSDGFESRSGSPTHDIQSYLVNRR) has biased composition (polar residues). Phosphoserine is present on residues Ser-180, Ser-187, and Ser-189. Thr-191 is modified (phosphothreonine).

The protein localises to the cytoplasm. Its subcellular location is the nucleus. Its function is as follows. Involved in sporulation and has a role in meiosis. The chain is Meiotically up-regulated gene 123 protein (mug123) from Schizosaccharomyces pombe (strain 972 / ATCC 24843) (Fission yeast).